A 458-amino-acid polypeptide reads, in one-letter code: Transcription factor PCF5 (458 aa).

Disordered regions lie at residues 1 to 103, 159 to 182, 278 to 299, and 424 to 458; these read MGDA…RGPR, GAGA…ENSD, MFHH…TTQQ, and RLPA…ASHH. Residues 65-74 are compositionally biased toward gly residues; it reads RGGGGGGGGE. A TCP domain is found at 89–147; it reads RKDRHSKVCTARGPRDRRVRLSAHTAIQFYDVQDRLGYDRPSKAVDWLIKNAKDAIDKL.

In terms of assembly, forms homodimers and heterodimers.

It is found in the nucleus. Transcription activator. Binds the promoter core sequence 5'-GGNCC-3'. The sequence is that of Transcription factor PCF5 (PCF5) from Oryza sativa subsp. japonica (Rice).